The sequence spans 245 residues: 2,3,4,5-tetrahydropyridine-2,6-dicarboxylate N-acetyltransferase (245 aa).

The protein belongs to the transferase hexapeptide repeat family. DapH subfamily.

The enzyme catalyses (S)-2,3,4,5-tetrahydrodipicolinate + acetyl-CoA + H2O = L-2-acetamido-6-oxoheptanedioate + CoA. It participates in amino-acid biosynthesis; L-lysine biosynthesis via DAP pathway; LL-2,6-diaminopimelate from (S)-tetrahydrodipicolinate (acetylase route): step 1/3. Its function is as follows. Catalyzes the transfer of an acetyl group from acetyl-CoA to tetrahydrodipicolinate. The polypeptide is 2,3,4,5-tetrahydropyridine-2,6-dicarboxylate N-acetyltransferase (Methanopyrus kandleri (strain AV19 / DSM 6324 / JCM 9639 / NBRC 100938)).